The chain runs to 592 residues: Elongation factor 1 alpha-like protein (592 aa).

2 disordered regions span residues Met1–Arg35 and Ser78–Pro159. A compositionally biased stretch (acidic residues) spans Leu12–Glu32. The span at Gly82–Leu111 shows a compositional bias: basic and acidic residues. Over residues Glu113 to Asn124 the composition is skewed to polar residues. Over residues Val137–Lys151 the composition is skewed to basic and acidic residues. A tr-type G domain is found at Lys175–Tyr401. Positions Gly184–Ser191 are G1. GTP is bound at residue Gly184–Ser191. The interval Gly240–Asp244 is G2. Residues Asp261–Gly264 are G3. Residues Asn323 to Asp326 and Phe352 to Ser355 contribute to the GTP site. The interval Asn323 to Asp326 is G4. The segment at Ser363–Ile365 is G5.

The protein belongs to the TRAFAC class translation factor GTPase superfamily. Classic translation factor GTPase family. Component of the Dom34-Hbs1 complex, also named Pelota-HBS1L complex, composed of dom34 and hbs1.

Its subcellular location is the cytoplasm. The enzyme catalyses GTP + H2O = GDP + phosphate + H(+). Functionally, GTPase component of the Dom34-Hbs1 complex, a complex that recognizes stalled ribosomes and triggers the No-Go Decay (NGD) pathway. The Dom34-Hbs1 complex recognizes ribosomes stalled at the 3' end of an mRNA and engages stalled ribosomes by destabilizing mRNA in the mRNA channel. Following ribosome-binding, the Pelota-HBS1L complex promotes the disassembly of stalled ribosomes, followed by degradation of damaged mRNAs as part of the NGD pathway. In Schizosaccharomyces pombe (strain 972 / ATCC 24843) (Fission yeast), this protein is Elongation factor 1 alpha-like protein.